The chain runs to 698 residues: MELNITSKSNPFGDTTAENDKKMLSNAFIETADFRTLIETDDRTIVVGRRGTGKSALFIQLNEHWKKDKKILILSFSPDDSQIIGFRSMLKPFTGSFNLARAATRLLWRYAMLMEIASYISSHYKLSSQISSETLLNEHLKKWNSAQGDILRKCRLVAKEYLDENNPEESIGDLQFNLNISEIENNIVSLLERSDRKVVILMDKLDEAYEPDNIGIGIIAGLAYASIELNQKAKCIRPIIFLRDNIFRSLSKEDPDYSRNIEGQVIRLHWDWAQLLMLSAKRMKVAFKLDIEKDQRVWDRCTADDLKGRNGFKRCLQFTLYRPRDLLSLLNEAFFSAFRENRETIINTDLEYAAKSISMARLEDLWKEYQKIFPSIQVITSAFRSIEPELTVYTCLKKIEASFELIEENGDPKITSEIQLLKASGILQSLYSVGFVGIRDKNTSSYSFCHDGRTPDKGFESNEKLLIHPCYWLGLNLNRNALAPEEAEEINDEYDINIISDNSAIRNKTIGQITTHLDQIPIGNEGATEFEQWCLDALRIVFASHLTDIKSHPNGNAVQRRDIIGTNGGKSDFWKRVLEDYKTRQVVFDAKNFEELGPSEYRQLQSYLTGPYGKLGFIINRDESEVLKSGKDLDWTKEMYQSHNSLIIKLPAKYISKLLQKLRNPEKHDAIDRQMGKLLTLYETSYMAIKSTQKKRRK.

This is Putative transposon gamma-delta 80.3 kDa protein (tnpX) from Escherichia coli (strain K12).